Here is a 501-residue protein sequence, read N- to C-terminus: ATP synthase subunit alpha (501 aa).

Glycine 169–threonine 176 contributes to the ATP binding site.

The protein belongs to the ATPase alpha/beta chains family. As to quaternary structure, F-type ATPases have 2 components, CF(1) - the catalytic core - and CF(0) - the membrane proton channel. CF(1) has five subunits: alpha(3), beta(3), gamma(1), delta(1), epsilon(1). CF(0) has three main subunits: a(1), b(2) and c(9-12). The alpha and beta chains form an alternating ring which encloses part of the gamma chain. CF(1) is attached to CF(0) by a central stalk formed by the gamma and epsilon chains, while a peripheral stalk is formed by the delta and b chains.

It is found in the cell membrane. The catalysed reaction is ATP + H2O + 4 H(+)(in) = ADP + phosphate + 5 H(+)(out). Produces ATP from ADP in the presence of a proton gradient across the membrane. The alpha chain is a regulatory subunit. This Streptococcus mutans serotype c (strain ATCC 700610 / UA159) protein is ATP synthase subunit alpha.